The chain runs to 407 residues: Peptidase T (407 aa).

His-81 lines the Zn(2+) pocket. Asp-83 is an active-site residue. Asp-142 contributes to the Zn(2+) binding site. The Proton acceptor role is filled by Glu-176. Zn(2+) is bound by residues Glu-177, Asp-199, and His-381.

This sequence belongs to the peptidase M20B family. The cofactor is Zn(2+).

It localises to the cytoplasm. The enzyme catalyses Release of the N-terminal residue from a tripeptide.. Functionally, cleaves the N-terminal amino acid of tripeptides. The protein is Peptidase T of Streptococcus pneumoniae (strain JJA).